Reading from the N-terminus, the 255-residue chain is MMTFISCAKTMTGRSKMQTPVTSTPQFQTEAIQNALDMSQFSAEELERLLRVNSKIAAENYMRFQDFCSDSPSALAALLAYTGIVYKRIHPQDFTPEDFQYAQDHLRITSFLYGLLRPLDQIKNYRMEGDIKLPERGGISMFDYWKPILTDTFIKEIKARGGILINLASGEMKDLFDWKRVEQEVQVITPEFQVWKKGKLTTVVVYAKMCRGELTRFIIKNRIENPGDLKGFKWEGFSFDAGHSTDTHYLFSLLS.

The protein belongs to the UPF0246 family.

This Phocaeicola vulgatus (strain ATCC 8482 / DSM 1447 / JCM 5826 / CCUG 4940 / NBRC 14291 / NCTC 11154) (Bacteroides vulgatus) protein is UPF0246 protein BVU_0413.